We begin with the raw amino-acid sequence, 1072 residues long: DNA-directed RNA polymerase subunit beta (1072 aa).

Belongs to the RNA polymerase beta chain family. In plastids the minimal PEP RNA polymerase catalytic core is composed of four subunits: alpha, beta, beta', and beta''. When a (nuclear-encoded) sigma factor is associated with the core the holoenzyme is formed, which can initiate transcription.

It is found in the plastid. The protein localises to the chloroplast. The enzyme catalyses RNA(n) + a ribonucleoside 5'-triphosphate = RNA(n+1) + diphosphate. Functionally, DNA-dependent RNA polymerase catalyzes the transcription of DNA into RNA using the four ribonucleoside triphosphates as substrates. This chain is DNA-directed RNA polymerase subunit beta, found in Barbarea verna (Land cress).